The following is a 566-amino-acid chain: MEKYFPKYVPFFSLLALSGLLYLLWSITSLESWNCQTVSTFYQLQNSIQSVLKTSELLLPTEFNYSFCAHLGQEPTLEEAREESYLLKSIAWPEPSTLGLPLRQSSDPAQSYYTIQDTGDLRVGGQLAVKVHMHNFLGQPKKHGGDFLVARLHTPELVAGVAGQVRDHNNGNYTIFFPLLWAGVAQVELTMIHSSEAVMVLKRLREEQSDRVFFKSLFRSGYISESTLCNPCLPLKPQPLCNYTDPQTGEPWYCYKPKMLDCDTRIDHSKGGYKKNLLTVYESQFFQSGVNIKVPIHSAGVDNVTVLPASKVRTKKMRLEFTPSGYYYQGSWRPLSGVVPRQFNTSSLINQCLRGKMLYMYGDSTVRQWYEYLITNVPEFKEFNFHSAKNVGPYMGVNMNYNALLKYRCHGPPIRFTSVSSAEMRYISNELDGLSGGSDTVVVISIWSHFSTYPVPVYIRRLRHIRKAVIRLLNREPTTLVFIRTGNLQKLDAESSLFNSDWFSQQLDTVLRAMFKGLNVQLVDAWEMTLAHHHPHQLHPQLDIVSNMVNFILSHICPVRKKKKRG.

The N-terminal stretch at 1–32 is a signal peptide; that stretch reads MEKYFPKYVPFFSLLALSGLLYLLWSITSLES. Residues Asn64, Asn172, Asn242, Asn303, and Asn344 are each glycosylated (N-linked (GlcNAc...) asparagine).

This sequence belongs to the NXPE family.

It localises to the secreted. This Danio rerio (Zebrafish) protein is NXPE family member 3 (nxpe3).